A 1005-amino-acid polypeptide reads, in one-letter code: MAPARGRLPPALWVVTAAAAAATCVSAARGEVNLLDTSTIHGDWGWLTYPAHGWDSINEVDESFQPIHTYQVCNVMSPNQNNWLRTSWVPRDGARRVYAEIKFTLRDCNSMPGVLGTCKETFNLYYLESDRDLGASTQESQFLKIDTIAADESFTGADLGVRRLKLNTEVRSVGPLSKRGFYLAFQDIGACLAILSLRIYYKKCPAMVRNLAAFSEAVTGADSSSLVEVRGQCVRHSEERDTPKMYCSAEGEWLVPIGKCVCSAGYEERRDACVACELGFYKSAPGDQLCARCPPHSHSAAPAAQACHCDLSYYRAALDPPSSACTRPPSAPVNLISSVNGTSVTLEWAPPLDPGGRSDITYNAVCRRCPWALSRCEACGSGTRFVPQQTSLVQASLLVANLLAHMNYSFWIEAVNGVSDLSPEPRRAAVVNITTNQAAPSQVVVIRQERAGQTSVSLLWQEPEQPNGIILEYEIKYYEKDKEMQSYSTLKAVTTRATVSGLKPGTRYVFQVRARTSAGCGRFSQAMEVETGKPRPRYDTRTIVWICLTLITGLVVLLLLLICKKRHCGYSKAFQDSDEEKMHYQNGQAPPPVFLPLHHPPGKLPEPQFYAEPHTYEEPGRAGRSFTREIEASRIHIEKIIGSGDSGEVCYGRLRVPGQRDVPVAIKALKAGYTERQRRDFLSEASIMGQFDHPNIIRLEGVVTRGRLAMIVTEYMENGSLDTFLRTHDGQFTIMQLVGMLRGVGAGMRYLSDLGYVHRDLAARNVLVDSNLVCKVSDFGLSRVLEDDPDAAYTTTGGKIPIRWTAPEAIAFRTFSSASDVWSFGVVMWEVLAYGERPYWNMTNRDVISSVEEGYRLPAPMGCPHALHQLMLDCWHKDRAQRPRFSQIVSVLDALIRSPESLRATATVSRCPPPAFVRSCFDLRGGSGGGGGLTVGDWLDSIRMGRYRDHFAAGGYSSLGMVLRMNAQDVRALGITLMGHQKKILGSIQTMRAQLTSTQGPRRHL.

A signal peptide spans 1-27; it reads MAPARGRLPPALWVVTAAAAAATCVSA. Topologically, residues 28-542 are extracellular; sequence ARGEVNLLDT…KPRPRYDTRT (515 aa). Residues 31-209 form the Eph LBD domain; sequence EVNLLDTSTI…YYKKCPAMVR (179 aa). Fibronectin type-III domains are found at residues 328–438 and 439–534; these read PPSA…TNQA and APSQ…TGKP. Asn-340, Asn-407, and Asn-432 each carry an N-linked (GlcNAc...) asparagine glycan. The chain crosses the membrane as a helical span at residues 543–563; sequence IVWICLTLITGLVVLLLLLIC. The tract at residues 564–570 is mediates interaction with ANKS1A and ANKS1B; sequence KKRHCGY. The Cytoplasmic segment spans residues 564 to 1005; that stretch reads KKRHCGYSKA…TSTQGPRRHL (442 aa). The segment at 589-644 is mediates interaction with PIK3CG and required for endocytosis; sequence APPPVFLPLHHPPGKLPEPQFYAEPHTYEEPGRAGRSFTREIEASRIHIEKIIGSG. Tyr-616 is modified (phosphotyrosine; by autocatalysis). One can recognise a Protein kinase domain in the interval 635–896; sequence IHIEKIIGSG…QIVSVLDALI (262 aa). Residues 641 to 649 and Lys-667 each bind ATP; that span reads IGSGDSGEV. Asp-760 functions as the Proton acceptor in the catalytic mechanism. Tyr-839 carries the phosphotyrosine; by autocatalysis modification. The 65-residue stretch at 930–994 folds into the SAM domain; the sequence is GGGLTVGDWL…LGSIQTMRAQ (65 aa). The PDZ-binding motif lies at 1003–1005; sequence RHL.

The protein belongs to the protein kinase superfamily. Tyr protein kinase family. Ephrin receptor subfamily. As to quaternary structure, heterotetramer upon binding of the ligand. The heterotetramer is composed of an ephrin dimer and a receptor dimer. Oligomerization is probably required to induce biological responses. May also form heterodimers with other ephrin receptors. Interacts with FYN; possible downstream effector of EPHA8 in regulation of cell adhesion. Interacts with PIK3CG; regulates integrin-mediated cell adhesion to substrate. Interacts with TIAM1; regulates clathrin-mediated endocytosis of EPHA8. Interacts with ANKS1A and ANKS1B; EPHA8 kinase activity-independent but stimulated by EPHA8 ubiquitination. Post-translationally, phosphorylated. Phosphorylation is stimulated upon binding of its ligands including EFNA2, EFNA3 and EFNA5. Autophosphorylation on Tyr-616 is critical for association with FYN. Autophosphorylation on Tyr-839 modulates tyrosine kinase activity. In terms of processing, ubiquitinated. Ubiquitination by CBL regulates the receptor stability and activity through proteasomal degradation. ANKS1A prevents ubiquitination and degradation.

The protein localises to the cell membrane. The protein resides in the cell projection. Its subcellular location is the early endosome membrane. It catalyses the reaction L-tyrosyl-[protein] + ATP = O-phospho-L-tyrosyl-[protein] + ADP + H(+). In terms of biological role, receptor tyrosine kinase which binds promiscuously GPI-anchored ephrin-A family ligands residing on adjacent cells, leading to contact-dependent bidirectional signaling into neighboring cells. The signaling pathway downstream of the receptor is referred to as forward signaling while the signaling pathway downstream of the ephrin ligand is referred to as reverse signaling. The GPI-anchored ephrin-A EFNA2, EFNA3, and EFNA5 are able to activate EPHA8 through phosphorylation. With EFNA5 may regulate integrin-mediated cell adhesion and migration on fibronectin substrate but also neurite outgrowth. During development of the nervous system also plays a role in axon guidance. Downstream effectors of the EPHA8 signaling pathway include FYN which promotes cell adhesion upon activation by EPHA8 and the MAP kinases in the stimulation of neurite outgrowth. The polypeptide is Ephrin type-A receptor 8 (EPHA8) (Homo sapiens (Human)).